We begin with the raw amino-acid sequence, 357 residues long: DNA replication and repair protein RecF (357 aa).

An ATP-binding site is contributed by 30-37 (GANGSGKT).

Belongs to the RecF family.

It is found in the cytoplasm. Its function is as follows. The RecF protein is involved in DNA metabolism; it is required for DNA replication and normal SOS inducibility. RecF binds preferentially to single-stranded, linear DNA. It also seems to bind ATP. The chain is DNA replication and repair protein RecF from Enterobacter sp. (strain 638).